The primary structure comprises 377 residues: Nitric oxide reductase FlRd-NAD(+) reductase (377 aa).

This sequence belongs to the FAD-dependent oxidoreductase family. FAD is required as a cofactor.

It localises to the cytoplasm. It carries out the reaction 2 reduced [nitric oxide reductase rubredoxin domain] + NAD(+) + H(+) = 2 oxidized [nitric oxide reductase rubredoxin domain] + NADH. It functions in the pathway nitrogen metabolism; nitric oxide reduction. One of at least two accessory proteins for anaerobic nitric oxide (NO) reductase. Reduces the rubredoxin moiety of NO reductase. The chain is Nitric oxide reductase FlRd-NAD(+) reductase from Escherichia coli O9:H4 (strain HS).